The sequence spans 77 residues: Major pilus subunit operon regulatory protein (77 aa).

To E.coli AfaF and DaaF.

Plays a role in the inhibition of methylation at the GATC1028 site located in the regulatory region upstream of the pabA promoter. May, in conjunction with the Mbf (methylation blocking factor), inhibits deoxyadenosine methylase from methylating the GATC1028 site. The protein is Major pilus subunit operon regulatory protein (papI) of Escherichia coli.